The following is a 536-amino-acid chain: Adenine deaminase (536 aa).

Positions 1–24 (MTPSPHDLLHCGMNSQDRDETNGD) are disordered.

The protein belongs to the metallo-dependent hydrolases superfamily. Adenine deaminase family. Requires Mn(2+) as cofactor.

It catalyses the reaction adenine + H2O + H(+) = hypoxanthine + NH4(+). The polypeptide is Adenine deaminase (Deinococcus radiodurans (strain ATCC 13939 / DSM 20539 / JCM 16871 / CCUG 27074 / LMG 4051 / NBRC 15346 / NCIMB 9279 / VKM B-1422 / R1)).